The primary structure comprises 142 residues: Nucleoside diphosphate kinase (142 aa).

ATP is bound by residues Lys11, Phe59, Arg87, Thr93, Arg104, and Asn114. His117 serves as the catalytic Pros-phosphohistidine intermediate.

This sequence belongs to the NDK family. Homotetramer. It depends on Mg(2+) as a cofactor.

The protein localises to the cytoplasm. The enzyme catalyses a 2'-deoxyribonucleoside 5'-diphosphate + ATP = a 2'-deoxyribonucleoside 5'-triphosphate + ADP. It carries out the reaction a ribonucleoside 5'-diphosphate + ATP = a ribonucleoside 5'-triphosphate + ADP. Its function is as follows. Major role in the synthesis of nucleoside triphosphates other than ATP. The ATP gamma phosphate is transferred to the NDP beta phosphate via a ping-pong mechanism, using a phosphorylated active-site intermediate. The protein is Nucleoside diphosphate kinase of Yersinia pseudotuberculosis serotype I (strain IP32953).